The sequence spans 204 residues: Ribonuclease HII (204 aa).

The region spanning Q14–K204 is the RNase H type-2 domain. A divalent metal cation is bound by residues D20, E21, and D116.

This sequence belongs to the RNase HII family. Mn(2+) is required as a cofactor. Mg(2+) serves as cofactor.

The protein localises to the cytoplasm. It catalyses the reaction Endonucleolytic cleavage to 5'-phosphomonoester.. Its function is as follows. Endonuclease that specifically degrades the RNA of RNA-DNA hybrids. The protein is Ribonuclease HII of Chloroherpeton thalassium (strain ATCC 35110 / GB-78).